The primary structure comprises 507 residues: MEEFQGYLELDRSWQDDFLYPLILQESIYALVHNQDLGFNRSILLSKKKGYDTKYSLLVVKRLVIRMYQQNFVILSLNHSNKNAFFVPNKNLYSQRISEVFAVIAEIPVSMRVMSSLKGKERKQYKNLQSIHSIFPFLENKFSRLNHVLDILIPHPVHPKILVQTIRYCVKDISCLHLLQLLLYEYCNNGITLKGSVSNFSKKKNQRFLLFLYNSYVCECESIFVFLRNRSSHLRSTSYGAFLARVYFYLKLEHFLKVFTKHCRVILQFFKDPFIHYIRYQGKWILASRGTFLLMTKFKYYFVNFWQCHFYLWLQTRRIYINKSLNQPIDFIGFRLSVRLNPSVVRSQMLENAFLIYNGIKKFETLVPTMSLIGSLAKEKFCNVLGHPISKPAWADLSDSDIIRRFGRMCRNLSHYYSGSSKKGGLYRIKYILRLSCARTLARKHKSTVRAFMKRLGSEFFEEFFFKEEKVISLILSRDSSISRRLYRGPIWYFDIFCIHDLASHND.

Belongs to the intron maturase 2 family. MatK subfamily.

The protein resides in the plastid. It is found in the chloroplast. In terms of biological role, usually encoded in the trnK tRNA gene intron. Probably assists in splicing its own and other chloroplast group II introns. This chain is Maturase K, found in Fagopyrum esculentum (Common buckwheat).